Here is a 510-residue protein sequence, read N- to C-terminus: Probable cytosol aminopeptidase (510 aa).

Residues Lys272 and Asp277 each contribute to the Mn(2+) site. Lys284 is an active-site residue. Residues Asp296, Asp355, and Glu357 each contribute to the Mn(2+) site. Arg359 is a catalytic residue.

This sequence belongs to the peptidase M17 family. Requires Mn(2+) as cofactor.

It is found in the cytoplasm. It catalyses the reaction Release of an N-terminal amino acid, Xaa-|-Yaa-, in which Xaa is preferably Leu, but may be other amino acids including Pro although not Arg or Lys, and Yaa may be Pro. Amino acid amides and methyl esters are also readily hydrolyzed, but rates on arylamides are exceedingly low.. The enzyme catalyses Release of an N-terminal amino acid, preferentially leucine, but not glutamic or aspartic acids.. Functionally, presumably involved in the processing and regular turnover of intracellular proteins. Catalyzes the removal of unsubstituted N-terminal amino acids from various peptides. This is Probable cytosol aminopeptidase from Synechococcus sp. (strain JA-2-3B'a(2-13)) (Cyanobacteria bacterium Yellowstone B-Prime).